Reading from the N-terminus, the 175-residue chain is NADH-ubiquinone oxidoreductase chain 6 (175 aa).

A run of 5 helical transmembrane segments spans residues 1–21, 25–45, 47–67, 88–108, and 149–169; these read MMTY…VGFS, SPIY…GIVL, FGGS…MLVV, AVLG…CYIL, and YGTW…LVIM.

It belongs to the complex I subunit 6 family. In terms of assembly, core subunit of respiratory chain NADH dehydrogenase (Complex I) which is composed of 45 different subunits.

The protein localises to the mitochondrion inner membrane. The enzyme catalyses a ubiquinone + NADH + 5 H(+)(in) = a ubiquinol + NAD(+) + 4 H(+)(out). Functionally, core subunit of the mitochondrial membrane respiratory chain NADH dehydrogenase (Complex I) which catalyzes electron transfer from NADH through the respiratory chain, using ubiquinone as an electron acceptor. Essential for the catalytic activity and assembly of complex I. This is NADH-ubiquinone oxidoreductase chain 6 (MT-ND6) from Phoca vitulina (Harbor seal).